The primary structure comprises 891 residues: Alanine--tRNA ligase (891 aa).

Positions 564, 568, 681, and 685 each coordinate Zn(2+).

The protein belongs to the class-II aminoacyl-tRNA synthetase family. Requires Zn(2+) as cofactor.

It is found in the cytoplasm. It carries out the reaction tRNA(Ala) + L-alanine + ATP = L-alanyl-tRNA(Ala) + AMP + diphosphate. In terms of biological role, catalyzes the attachment of alanine to tRNA(Ala) in a two-step reaction: alanine is first activated by ATP to form Ala-AMP and then transferred to the acceptor end of tRNA(Ala). Also edits incorrectly charged Ser-tRNA(Ala) and Gly-tRNA(Ala) via its editing domain. The protein is Alanine--tRNA ligase of Methylorubrum extorquens (strain PA1) (Methylobacterium extorquens).